Consider the following 549-residue polypeptide: Oxygen-dependent choline dehydrogenase (549 aa).

4 to 33 (DFVIIGSGSAGSAMAYRLSEDGRYSVIVIE) is a binding site for FAD. The active-site Proton acceptor is histidine 465.

The protein belongs to the GMC oxidoreductase family. Requires FAD as cofactor.

The catalysed reaction is choline + A = betaine aldehyde + AH2. The enzyme catalyses betaine aldehyde + NAD(+) + H2O = glycine betaine + NADH + 2 H(+). Its pathway is amine and polyamine biosynthesis; betaine biosynthesis via choline pathway; betaine aldehyde from choline (cytochrome c reductase route): step 1/1. Its function is as follows. Involved in the biosynthesis of the osmoprotectant glycine betaine. Catalyzes the oxidation of choline to betaine aldehyde and betaine aldehyde to glycine betaine at the same rate. The sequence is that of Oxygen-dependent choline dehydrogenase from Brucella melitensis biotype 1 (strain ATCC 23456 / CCUG 17765 / NCTC 10094 / 16M).